The primary structure comprises 119 residues: Probable non-functional T cell receptor gamma variable 11 (119 aa).

Residues 1 to 18 (MPLVVAVIFFSLWVFALG) form the signal peptide. Residues 23–119 (PEISISRPAN…VYHCACWIRH (97 aa)) enclose the Ig-like domain. N32 is a glycosylation site (N-linked (GlcNAc...) asparagine).

Most probably, the gamma-delta TR is not assembled due to incorrect folding of the gamma chain. Gamma-delta TR is a heterodimer composed of a gamma and delta chain; disulfide-linked. The gamma-delta TR is associated with the transmembrane signaling CD3 coreceptor proteins following the stoichiometry: a single gamma-delta TR heterodimer associates with one CD3D-CD3E heterodimer, one CD3G-CD3E heterodimer and one CD247 homodimer forming a stable octameric structure. Upon activation, gamma-delta TR complex associates with FCER1G to initiate intracellular signaling.

Its subcellular location is the cell membrane. Functionally, probable non-functional open reading frame (ORF) of V region of the variable domain of T cell receptor (TR) gamma chain. Non-functional ORF generally cannot participate in the synthesis of a productive T cell receptor (TR) chain due to altered V-(D)-J or switch recombination and/or splicing site (at mRNA level) and/or conserved amino acid change (protein level). Gamma-delta TRs recognize a variety of self and foreign non-peptide antigens frequently expressed at the epithelial boundaries between the host and external environment, including endogenous lipids presented by MH-like protein CD1D and phosphoantigens presented by butyrophilin-like molecule BTN3A1. Upon antigen recognition induces rapid, innate-like immune responses involved in pathogen clearance and tissue repair. Binding of gamma-delta TR complex to antigen triggers phosphorylation of immunoreceptor tyrosine-based activation motifs (ITAMs) in the CD3 chains by the LCK and FYN kinases, allowing the recruitment, phosphorylation, and activation of ZAP70 that facilitates phosphorylation of the scaffolding proteins LCP2 and LAT. This lead to the formation of a supramolecular signalosome that recruits the phospholipase PLCG1, resulting in calcium mobilization and ERK activation, ultimately leading to T cell expansion and differentiation into effector cells. Gamma-delta TRs are produced through somatic rearrangement of a limited repertoire of variable (V), diversity (D), and joining (J) genes. The potential diversity of gamma-delta TRs is conferred by the unique ability to rearrange (D) genes in tandem and to utilize all three reading frames. The combinatorial diversity is considerably increased by the sequence exonuclease trimming and random nucleotide (N) region additions which occur during the V-(D)-J rearrangements. This is Probable non-functional T cell receptor gamma variable 11 from Homo sapiens (Human).